Here is a 226-residue protein sequence, read N- to C-terminus: Ribonuclease 3 (226 aa).

Residues 2-129 form the RNase III domain; it reads IETISKTIKY…LIGAIYLDGG (128 aa). Glutamate 42 is a Mg(2+) binding site. Aspartate 46 is an active-site residue. Mg(2+) is bound by residues asparagine 115 and glutamate 118. Residue glutamate 118 is part of the active site. Residues 154–223 form the DRBM domain; that stretch reads DAKTILQEFI…ASLMLNQIKD (70 aa).

It belongs to the ribonuclease III family. Homodimer. The cofactor is Mg(2+).

It localises to the cytoplasm. The enzyme catalyses Endonucleolytic cleavage to 5'-phosphomonoester.. Functionally, digests double-stranded RNA. Involved in the processing of primary rRNA transcript to yield the immediate precursors to the large and small rRNAs (23S and 16S). Processes some mRNAs, and tRNAs when they are encoded in the rRNA operon. Processes pre-crRNA and tracrRNA of type II CRISPR loci if present in the organism. The protein is Ribonuclease 3 of Ehrlichia canis (strain Jake).